We begin with the raw amino-acid sequence, 201 residues long: Recombination protein RecR (201 aa).

The C4-type zinc-finger motif lies at 57–72 (CADCRTFTEQEVCNIC). Residues 81–176 (GQICVVESPA…EASRIAHGVP (96 aa)) form the Toprim domain.

This sequence belongs to the RecR family.

May play a role in DNA repair. It seems to be involved in an RecBC-independent recombinational process of DNA repair. It may act with RecF and RecO. This Escherichia coli O17:K52:H18 (strain UMN026 / ExPEC) protein is Recombination protein RecR.